Reading from the N-terminus, the 163-residue chain is Shikimate kinase (163 aa).

Residue 10–15 (GVGKTT) coordinates ATP. Thr14 provides a ligand contact to Mg(2+). Positions 28, 52, and 75 each coordinate substrate. ATP is bound at residue Arg116. Arg134 provides a ligand contact to substrate. An ATP-binding site is contributed by Arg151.

It belongs to the shikimate kinase family. In terms of assembly, monomer. The cofactor is Mg(2+).

Its subcellular location is the cytoplasm. It catalyses the reaction shikimate + ATP = 3-phosphoshikimate + ADP + H(+). It functions in the pathway metabolic intermediate biosynthesis; chorismate biosynthesis; chorismate from D-erythrose 4-phosphate and phosphoenolpyruvate: step 5/7. In terms of biological role, catalyzes the specific phosphorylation of the 3-hydroxyl group of shikimic acid using ATP as a cosubstrate. This is Shikimate kinase from Streptococcus pyogenes serotype M12 (strain MGAS2096).